The chain runs to 180 residues: Thebaine synthase 1 (180 aa).

Serine 96 is a binding site for thebaine. Histidine 111 serves as the catalytic Proton acceptor. Residue threonine 127 participates in thebaine binding.

It belongs to the MLP family. Homodimer (allosteric) and oligomers. As to expression, expressed in poppy latex.

It catalyses the reaction (7S)-O-acetylsalutaridinol = thebaine + acetate + H(+). It functions in the pathway alkaloid biosynthesis; morphine biosynthesis. Catalyzes the formation of thebaine from (7S)-salutaridinol 7-O-acetate at the expense of labile hydroxylated by-products, which are preferentially produced by spontaneous allylic elimination. The chain is Thebaine synthase 1 from Papaver somniferum (Opium poppy).